A 261-amino-acid chain; its full sequence is X-box-binding protein 1 (261 aa).

At 1-185 (MVVVAPAQSP…VQAQLSPLQN (185 aa)) the chain is on the cytoplasmic side. Positions 27-37 (TGGAPAGRALP) are enriched in low complexity. Positions 27 to 65 (TGGAPAGRALPVMVPGQQGASPEGASGVPPQARKRQRLT) are disordered. Phosphoserine is present on residues Ser47 and Ser68. The region spanning 70–133 (EEKALRRKLK…HGLVVENQEL (64 aa)) is the bZIP domain. A basic motif region spans residues 72 to 94 (KALRRKLKNRVAAQTARDRKKAR). The segment at 76–92 (RKLKNRVAAQTARDRKK) is nuclear localization signal (NLS). The segment at 98-133 (LEQQVVDLEEENQKLLLENQLLREKTHGLVVENQEL) is leucine-zipper. The chain crosses the membrane as a helical; Signal-anchor for type II membrane protein span at residues 186 to 203 (ISPWTLMALTLQTLSLTS). The Lumenal portion of the chain corresponds to 204–261 (CWAFCSTWTQSCSSDVLPQSLPAWSSSQKWTQKDPVPYRPPLLHPWGRHQPSWKPLMN).

The protein belongs to the bZIP family. Isoform 1 interacts with HM13. Isoform 1 interacts with RNF139; the interaction induces ubiquitination and degradation of isoform 1. Isoform 1 interacts (via luminal domain) with DERL1; the interaction obviates the need for ectodomain shedding prior HM13/SPP-mediated XBP1 isoform 1 cleavage. Isoform 1 interacts with HDAC3 and AKT1; the interactions occur in endothelial cell (EC) under disturbed flow. Isoform 1 interacts with the oncoprotein FOS. Interacts with SIRT1. Post-translationally, isoform 1 is ubiquitinated, leading to proteasome-mediated degradation in response to ER stress. In terms of processing, X-box-binding protein 1, cytoplasmic form and luminal form are produced by intramembrane proteolytic cleavage of ER membrane-anchored isoform 1 triggered by HM13/SPP in a DERL1-RNF139-dependent and VCP/p97-independent manner. X-box-binding protein 1, luminal form is ubiquitinated leading to proteasomal degradation. Acetylated by EP300; acetylation positively regulates the transcriptional activity of XBP1. Deacetylated by SIRT1; deacetylation negatively regulates the transcriptional activity of XBP1.

Its subcellular location is the nucleus. It localises to the endoplasmic reticulum. The protein resides in the cytoplasm. It is found in the endoplasmic reticulum membrane. The protein localises to the membrane. Functionally, functions as a transcription factor during endoplasmic reticulum (ER) stress by regulating the unfolded protein response (UPR). Required for cardiac myogenesis and hepatogenesis during embryonic development, and the development of secretory tissues such as exocrine pancreas and salivary gland. Involved in terminal differentiation of B lymphocytes to plasma cells and production of immunoglobulins. Modulates the cellular response to ER stress in a PIK3R-dependent manner. Binds to the cis-acting X box present in the promoter regions of major histocompatibility complex class II genes. Involved in VEGF-induced endothelial cell (EC) proliferation and retinal blood vessel formation during embryonic development but also for angiogenesis in adult tissues under ischemic conditions. Functions also as a major regulator of the UPR in obesity-induced insulin resistance and type 2 diabetes for the management of obesity and diabetes prevention. Its function is as follows. Acts as a weak transcriptional factor. Together with HDAC3, contributes to the activation of NFE2L2-mediated HMOX1 transcription factor gene expression in a PI(3)K/mTORC2/Akt-dependent signaling pathway leading to EC survival under disturbed flow/oxidative stress. Binds to the ER stress response element (ERSE) upon ER stress. Binds to the consensus 5'-GATGACGTG[TG]N(3)[AT]T-3' sequence related to cAMP responsive element (CRE)-like sequences. Associates preferentially to the HDAC3 gene promoter region in a static flow-dependent manner. Binds to the CDH5/VE-cadherin gene promoter region. In Bos taurus (Bovine), this protein is X-box-binding protein 1.